A 218-amino-acid polypeptide reads, in one-letter code: Pyridoxine/pyridoxamine 5'-phosphate oxidase (218 aa).

Residues 14–17 and Lys-72 each bind substrate; that span reads RREY. FMN-binding positions include 67–72, 82–83, Arg-88, Lys-89, and Gln-111; these read RIVLLK and YT. Residues Tyr-129, Arg-133, and Ser-137 each contribute to the substrate site. Residues 146-147 and Trp-191 each bind FMN; that span reads QS. 197 to 199 lines the substrate pocket; that stretch reads RLH. Arg-201 lines the FMN pocket.

The protein belongs to the pyridoxamine 5'-phosphate oxidase family. In terms of assembly, homodimer. Requires FMN as cofactor.

The catalysed reaction is pyridoxamine 5'-phosphate + O2 + H2O = pyridoxal 5'-phosphate + H2O2 + NH4(+). The enzyme catalyses pyridoxine 5'-phosphate + O2 = pyridoxal 5'-phosphate + H2O2. It participates in cofactor metabolism; pyridoxal 5'-phosphate salvage; pyridoxal 5'-phosphate from pyridoxamine 5'-phosphate: step 1/1. The protein operates within cofactor metabolism; pyridoxal 5'-phosphate salvage; pyridoxal 5'-phosphate from pyridoxine 5'-phosphate: step 1/1. Its function is as follows. Catalyzes the oxidation of either pyridoxine 5'-phosphate (PNP) or pyridoxamine 5'-phosphate (PMP) into pyridoxal 5'-phosphate (PLP). The polypeptide is Pyridoxine/pyridoxamine 5'-phosphate oxidase (Escherichia coli O127:H6 (strain E2348/69 / EPEC)).